The primary structure comprises 402 residues: Tol-Pal system protein TolB (402 aa).

The N-terminal stretch at methionine 1–alanine 17 is a signal peptide.

The protein belongs to the TolB family. As to quaternary structure, the Tol-Pal system is composed of five core proteins: the inner membrane proteins TolA, TolQ and TolR, the periplasmic protein TolB and the outer membrane protein Pal. They form a network linking the inner and outer membranes and the peptidoglycan layer.

Its subcellular location is the periplasm. Part of the Tol-Pal system, which plays a role in outer membrane invagination during cell division and is important for maintaining outer membrane integrity. The chain is Tol-Pal system protein TolB from Campylobacter jejuni subsp. jejuni serotype O:2 (strain ATCC 700819 / NCTC 11168).